The chain runs to 340 residues: uncharacterized protein (340 aa).

The interval 284–340 is disordered; the sequence is DHSTPTNYQQETPASQQQLDQENEPIKPSKKSNSSSLPRGTTQPKSNSINRVSKLID. 2 stretches are compositionally biased toward polar residues: residues 286-303 and 320-334; these read STPT…QQLD and LPRG…SINR.

This is an uncharacterized protein from Mycoplasma genitalium (strain ATCC 33530 / DSM 19775 / NCTC 10195 / G37) (Mycoplasmoides genitalium).